Here is a 581-residue protein sequence, read N- to C-terminus: MVASSKMMNVRVTTMDAELEFAIQQGTTGKQLFDQVVKTIGLREVWFFGLQYTDSKGDNTWIKLYKKVMSQDVQKGDPLLFKFRAKFYPEDVAEELIQDITLRLFYLQVKNAILSDEIYCPPETSVLLASYAVQARHGDYNKGTHVPGFLAKDRLLPQRVIDQHKMSKDEWENSITTWWQEHRGLLREDAMMEYLKIAQDLEMYGVNYFEIRNKKGTELWLGVDALGLNIYEKEDRLTPKIGFPWSEIRNISFNDRKFIIKPIDKKAPDFVFFAPRVRINKRILALCMGNHELYMRRRKPDTIDVQQMKAQARDEKNAKQQEREKLQLALAARERAEKKQQEYEDRLRSMQEEMERKQANLSEAQDTIRRLQEQLNQVQAAKEELEQRQNELHEMMQRLEETKNMEATERAKLEEEIRVKQLEMQKIQEEVTLKDSETKRLHEEVEEAIRKQVAKGSRAAAALQAATTTPKHHHVEEEEENEEELINGENGTQDFSKDFDTDEHIKDPVEERRTLAERNERLQDQLKALKQDLALSRDDTMETPNDKIHRENVRQGRDKYKTLREIRKGNTKRRVDQFENM.

Positions 8–298 (MNVRVTTMDA…GNHELYMRRR (291 aa)) constitute an FERM domain. Residues 452-519 (QVAKGSRAAA…EERRTLAERN (68 aa)) are disordered. A compositionally biased stretch (low complexity) spans 459–469 (AAAALQAATTT). Residues 477–486 (EEEENEEELI) show a composition bias toward acidic residues. Positions 495 to 519 (FSKDFDTDEHIKDPVEERRTLAERN) are enriched in basic and acidic residues. Thr-562 is modified (phosphothreonine).

As to quaternary structure, interacts with cytoskeletal actin.

The protein resides in the cell junction. The protein localises to the adherens junction. Its subcellular location is the cell projection. It localises to the microvillus. It is found in the rhabdomere. The protein resides in the cell membrane. The protein localises to the cytoplasm. Its subcellular location is the cytoskeleton. Involved in connections of major cytoskeletal structures to the plasma membrane. In Anopheles gambiae (African malaria mosquito), this protein is Moesin/ezrin/radixin homolog 1.